We begin with the raw amino-acid sequence, 54 residues long: MARNEIRPIVKLRSTAGTGYTYVTRKNRRNDPDRLMLKKCDPVVRRHVDFREER.

Belongs to the bacterial ribosomal protein bL33 family.

This Mycobacterium sp. (strain KMS) protein is Large ribosomal subunit protein bL33B.